Reading from the N-terminus, the 160-residue chain is Cytochrome b6-f complex subunit 4 (160 aa).

3 consecutive transmembrane segments (helical) span residues 36 to 56 (LLYIFPVVILGTIACNVGLAV), 95 to 115 (LLGVLLMVSVPTGLLTVPFLE), and 131 to 151 (TVFLFGTALSLWLGIGATLPI).

The protein belongs to the cytochrome b family. PetD subfamily. The 4 large subunits of the cytochrome b6-f complex are cytochrome b6, subunit IV (17 kDa polypeptide, petD), cytochrome f and the Rieske protein, while the 4 small subunits are petG, petL, petM and petN. The complex functions as a dimer.

It localises to the plastid. It is found in the chloroplast thylakoid membrane. Component of the cytochrome b6-f complex, which mediates electron transfer between photosystem II (PSII) and photosystem I (PSI), cyclic electron flow around PSI, and state transitions. This chain is Cytochrome b6-f complex subunit 4, found in Amborella trichopoda.